The following is a 484-amino-acid chain: Arginine ADP-riboxanase OspC3 (484 aa).

The NAD(+) site is built by His-143, Gln-144, Ser-145, Asn-155, Lys-157, Thr-169, Asn-172, and Thr-173. Glu-326 is a catalytic residue. 3 ANK repeats span residues 369 to 398 (MAHQ…FTKQ), 413 to 444 (NLYD…DVNK), and 451 to 480 (SGDT…ILGK).

The protein belongs to the OspC family. Interacts with host calmodulin (CALM1, CALM2 and/or CALM3); specifically interacts with the apo form of calmodulin, preventing calcium-binding.

It localises to the secreted. It is found in the host cytoplasm. It catalyses the reaction L-arginyl-[protein] + NAD(+) = ADP-riboxanated L-argininyl-[protein] + nicotinamide + NH4(+) + H(+). Interaction with host calmodulin (CALM1, CALM2 and/or CALM3) is required to mediate arginine ADP-riboxanation of host caspases. In terms of biological role, ADP-riboxanase effector that inhibits host cell pyroptosis. Acts by mediating arginine ADP-riboxanation of host CASP4/CASP11, blocking CASP4/CASP11 autoprocessing. This prevents CASP4 activation and ability to recognize and cleave GSDMD, thereby inhibiting LPS-induced pyroptosis. ADP-riboxanation takes place in two steps: OspC3 first catalyzes ADP-ribosylation of target Arg, and then initiates a deamination to remove one N-omega group. Independently of its ADP-riboxanase activity, acts as an inhibitor of calcium signaling by inhibiting host calmodulin, preventing activation of the JAK-STAT signaling pathway in response to interferon-beta. Mechanistically, acts by binding to the apo form of calmodulin, preventing calcium-binding and ability to activate host CaMK2 (CAMKII), which is required to stimulate the JAK-STAT signaling pathway in response to interferon-beta. The chain is Arginine ADP-riboxanase OspC3 from Shigella flexneri.